The following is a 535-amino-acid chain: CTP synthase (535 aa).

An amidoligase domain region spans residues 1–268; the sequence is MSTKYIFVTG…DQIVCDHLKL (268 aa). Residue serine 14 participates in CTP binding. Serine 14 contributes to the UTP binding site. 15–20 lines the ATP pocket; the sequence is SMGKGI. L-glutamine is bound at residue tyrosine 55. Residue aspartate 72 participates in ATP binding. The Mg(2+) site is built by aspartate 72 and glutamate 142. Residues 149 to 151, 189 to 194, and lysine 225 contribute to the CTP site; these read DME and KTKIAQ. Residues 189-194 and lysine 225 contribute to the UTP site; that span reads KTKIAQ. Residues 293–535 form the Glutamine amidotransferase type-1 domain; it reads KIALVGKYVE…FIRVAVENSK (243 aa). L-glutamine is bound at residue glycine 355. The active-site Nucleophile; for glutamine hydrolysis is cysteine 382. L-glutamine contacts are provided by residues 383 to 386, glutamate 406, and arginine 464; that span reads LGMQ. Catalysis depends on residues histidine 509 and glutamate 511.

The protein belongs to the CTP synthase family. In terms of assembly, homotetramer.

The enzyme catalyses UTP + L-glutamine + ATP + H2O = CTP + L-glutamate + ADP + phosphate + 2 H(+). The catalysed reaction is L-glutamine + H2O = L-glutamate + NH4(+). It carries out the reaction UTP + NH4(+) + ATP = CTP + ADP + phosphate + 2 H(+). The protein operates within pyrimidine metabolism; CTP biosynthesis via de novo pathway; CTP from UDP: step 2/2. Allosterically activated by GTP, when glutamine is the substrate; GTP has no effect on the reaction when ammonia is the substrate. The allosteric effector GTP functions by stabilizing the protein conformation that binds the tetrahedral intermediate(s) formed during glutamine hydrolysis. Inhibited by the product CTP, via allosteric rather than competitive inhibition. Its function is as follows. Catalyzes the ATP-dependent amination of UTP to CTP with either L-glutamine or ammonia as the source of nitrogen. Regulates intracellular CTP levels through interactions with the four ribonucleotide triphosphates. This Lactococcus lactis subsp. lactis (strain IL1403) (Streptococcus lactis) protein is CTP synthase.